We begin with the raw amino-acid sequence, 956 residues long: Outer capsid protein VP2 (956 aa).

The protein belongs to the orbivirus VP2 family.

It is found in the virion. The VP2 protein is one of the two proteins (with VP5) which constitute the virus particle outer capsid. It is the major target of the host immunogenic response. Responsible for viral attachment to target host cell, probably by binding to sialic acid. This attachment induces virion internalization predominantly through clathrin-dependent endocytosis. This chain is Outer capsid protein VP2 (Segment-2), found in Bluetongue virus 11 (isolate USA) (BTV 11).